The primary structure comprises 465 residues: Cysteine--tRNA ligase (465 aa).

Cysteine 29 provides a ligand contact to Zn(2+). The short motif at 31–41 is the 'HIGH' region element; it reads PTVYNYIHIGN. Residues cysteine 209, histidine 234, and glutamate 238 each coordinate Zn(2+). A 'KMSKS' region motif is present at residues 266 to 270; that stretch reads KMSKS. Lysine 269 contacts ATP. A Phosphoserine modification is found at serine 270.

It belongs to the class-I aminoacyl-tRNA synthetase family. In terms of assembly, monomer. It depends on Zn(2+) as a cofactor.

It is found in the cytoplasm. The catalysed reaction is tRNA(Cys) + L-cysteine + ATP = L-cysteinyl-tRNA(Cys) + AMP + diphosphate. This is Cysteine--tRNA ligase from Bacillus cereus (strain ATCC 10987 / NRS 248).